The following is a 452-amino-acid chain: BUB3-interacting and GLEBS motif-containing protein ZNF207 (452 aa).

The tract at residues 1 to 92 is microtubule-binding region; that stretch reads MGRKKKKQLK…EGIPEKDMEE (92 aa). 2 C2H2-type zinc fingers span residues 11–34 and 35–58; these read PWCW…KAKH and FKCH…MQVH. 2 disordered regions span residues 99–131 and 298–330; these read QKTQ…SFQQ and STMS…TSAT. The span at 113-123 shows a compositional bias: acidic residues; that stretch reads DDSDYDDDDDT. Positions 329–361 are GLEBS; sequence ATSKLVHPDEDISLEEKRAQLPKYQRNLPRPGQ.

In terms of assembly, interacts (via GLEBS region) with bub3.

It is found in the nucleus. Its subcellular location is the chromosome. The protein localises to the centromere. It localises to the kinetochore. The protein resides in the cytoplasm. It is found in the cytoskeleton. Its subcellular location is the spindle. Kinetochore- and microtubule-binding protein that plays a key role in spindle assembly. Znf207/BuGZ is mainly composed of disordered low-complexity regions and undergoes phase transition or coacervation to form temperature-dependent liquid droplets. Coacervation promotes microtubule bundling and concentrates tubulin, promoting microtubule polymerization and assembly of spindle and spindle matrix by concentrating its building blocks. The chain is BUB3-interacting and GLEBS motif-containing protein ZNF207 from Xenopus laevis (African clawed frog).